The primary structure comprises 289 residues: D-alanine aminotransferase (289 aa).

Y31 contacts substrate. R50 serves as a coordination point for pyridoxal 5'-phosphate. 2 residues coordinate substrate: R99 and H101. K147 serves as the catalytic Proton acceptor. At K147 the chain carries N6-(pyridoxal phosphate)lysine. Residue E179 participates in pyridoxal 5'-phosphate binding.

Belongs to the class-IV pyridoxal-phosphate-dependent aminotransferase family. As to quaternary structure, homodimer. Pyridoxal 5'-phosphate is required as a cofactor.

The enzyme catalyses D-alanine + 2-oxoglutarate = D-glutamate + pyruvate. In terms of biological role, acts on the D-isomers of alanine, leucine, aspartate, glutamate, aminobutyrate, norvaline and asparagine. The enzyme transfers an amino group from a substrate D-amino acid to the pyridoxal phosphate cofactor to form pyridoxamine and an alpha-keto acid in the first half-reaction. The second half-reaction is the reverse of the first, transferring the amino group from the pyridoxamine to a second alpha-keto acid to form the product D-amino acid via a ping-pong mechanism. This is an important process in the formation of D-alanine and D-glutamate, which are essential bacterial cell wall components. This Listeria innocua serovar 6a (strain ATCC BAA-680 / CLIP 11262) protein is D-alanine aminotransferase (dat).